A 209-amino-acid chain; its full sequence is Uracil phosphoribosyltransferase (209 aa).

Residues Arg79, Arg104, and 131–139 contribute to the 5-phospho-alpha-D-ribose 1-diphosphate site; that span reads DPMLATGGS. Residues Ile194 and 199 to 201 each bind uracil; that span reads GDA. A 5-phospho-alpha-D-ribose 1-diphosphate-binding site is contributed by Asp200.

Belongs to the UPRTase family. Mg(2+) is required as a cofactor.

It carries out the reaction UMP + diphosphate = 5-phospho-alpha-D-ribose 1-diphosphate + uracil. It participates in pyrimidine metabolism; UMP biosynthesis via salvage pathway; UMP from uracil: step 1/1. Its activity is regulated as follows. Allosterically activated by GTP. Its function is as follows. Catalyzes the conversion of uracil and 5-phospho-alpha-D-ribose 1-diphosphate (PRPP) to UMP and diphosphate. This Lactiplantibacillus plantarum (strain ATCC BAA-793 / NCIMB 8826 / WCFS1) (Lactobacillus plantarum) protein is Uracil phosphoribosyltransferase.